The chain runs to 547 residues: uncharacterized protein (547 aa).

The Extracellular segment spans residues 1–21 (MVKKHQNSKMGNTNHFGHLKS). Residues 22–42 (FVGGNVVALGAGTPYLFSFYA) traverse the membrane as a helical segment. Residues 43 to 58 (PQLLSKCHIPVSASSK) lie on the Cytoplasmic side of the membrane. A helical transmembrane segment spans residues 59–79 (LSFSLTIGSSLMGILAGIVVD). Topologically, residues 80–83 (RSPK) are extracellular. The helical transmembrane segment at 84 to 104 (LSCLIGSMCVFIAYLILNLCY) threads the bilayer. Residues 105–110 (KHEWSS) are Cytoplasmic-facing. A helical transmembrane segment spans residues 111–131 (TFLISLSLVLIGYGSVSGFYA). Residues 132-144 (SVKCANTNFPQHR) are Extracellular-facing. A helical transmembrane segment spans residues 145–165 (GTAGAFPVSLYGLSGMVFSYL). Over 166-175 (CSKLFGENIE) the chain is Cytoplasmic. A helical transmembrane segment spans residues 176–196 (HVFIFLMVACGCMILVGYFSL). Residues 197 to 323 (DIFSNAEGDD…LKSSTFIGYY (127 aa)) lie on the Extracellular side of the membrane. Ser-237 is subject to Phosphoserine. The tract at residues 275-300 (LLSPSSPHTKYDFEDENTSKNTVGEN) is disordered. The helical transmembrane segment at 324-344 (IVLGILQGVGLMYIYSVGFMV) threads the bilayer. Topologically, residues 345–398 (QAQVSTPPLNQLPINAEKIQSLQVTLLSLLSFCGRLSSGPISDFLVKKFKAQRL) are cytoplasmic. Residues 399–419 (WNIVIASLLVFLASNKISHDF) form a helical membrane-spanning segment. At 420–437 (SSIEDPSLRASKSFKNIS) the chain is on the extracellular side. Residues 438–458 (VCSAIFGYSFGVLFGTFPSIV) traverse the membrane as a helical segment. At 459–469 (ADRFGTNGYST) the chain is on the cytoplasmic side. Residues 470 to 490 (LWGVLTTGGVFSVSVFTDILG) form a helical membrane-spanning segment. Topologically, residues 491 to 514 (RDFKANTGDDDGNCKKGVLCYSYT) are extracellular. The chain crosses the membrane as a helical span at residues 515 to 535 (FMVTKYCAAFNLLFVLGIIGY). Topologically, residues 536-547 (TYYRRRATANSL) are cytoplasmic.

Its subcellular location is the membrane. This is an uncharacterized protein from Saccharomyces cerevisiae (strain ATCC 204508 / S288c) (Baker's yeast).